A 339-amino-acid polypeptide reads, in one-letter code: Oncoprotein MEQ (339 aa).

Residues methionine 1–aspartate 80 form a disordered region. Phosphoserine; by host CDK2 is present on serine 42. The basic motif stretch occupies residues lysine 57–lysine 84. In terms of domain architecture, bZIP spans lysine 57–histidine 120. Over residues leucine 60–lysine 77 the composition is skewed to basic residues. Positions arginine 62 to glutamine 78 match the Nuclear localization signal motif. Residues leucine 85–leucine 113 are leucine-zipper. The tract at residues histidine 120–proline 339 is transactivation domain. Pro residues predominate over residues proline 145 to proline 160. The segment at proline 145–isoleucine 172 is disordered.

The protein belongs to the bZIP family. Jun subfamily. In terms of assembly, homodimer. Interacts with host JUN; this interaction allows MEQ to engage in host cell processes by disguising itself as a cellular JUN. Phosphorylated by host CDK2; this phosphorylation greatly reduces the DNA binding activity of MEQ.

It is found in the host nucleus. The protein resides in the host nucleolus. Its function is as follows. Functions as a DNA-binding transcription factor. Promotes transformation, host cell growth, host cell-cycle progression through G1/S phase, and possesses antiapoptotic activity. Forms functional heterodimers with host JUN. These heterodimers bind with high affinity DNA sequences called MEQ-responsive elements MERE I (TGACA/GTCA), while MEQ homodimers bind a second type of sites termed MERE II (ACACA). Both homo and heterodimerization of MEQ are required for oncogenesis. The polypeptide is Oncoprotein MEQ (MDV005) (Gallid herpesvirus 2 (strain Chicken/Md5/ATCC VR-987) (GaHV-2)).